The following is a 142-amino-acid chain: Coiled-coil-helix-coiled-coil-helix domain-containing protein 10, mitochondrial (142 aa).

The transit peptide at 1–16 (MPRGSRSAASRPASRP) directs the protein to the mitochondrion. Positions 1–20 (MPRGSRSAASRPASRPAAPS) are enriched in low complexity. Disordered regions lie at residues 1–45 (MPRG…PGLM) and 68–97 (ALTGAFSGGSSEPSQPAVQQAPTPAAPQPL). Positions 21-39 (AHPPAHPPPSAAAPAPAPS) are enriched in pro residues. Low complexity predominate over residues 80-90 (PSQPAVQQAPT). Residues 99 to 140 (MGPCAYEIRQFLDCSTTQSDLSLCEGFSEALKQCKYYHGLSS) enclose the CHCH domain. 2 consecutive short sequence motifs (cx9C motif) follow at residues 102-112 (CAYEIRQFLDC) and 122-132 (CEGFSEALKQC). 2 cysteine pairs are disulfide-bonded: Cys102–Cys132 and Cys112–Cys122.

As to expression, ubiquitously expressed. Higher expression is observed in heart and liver.

The protein localises to the mitochondrion intermembrane space. Functionally, may be involved in the maintenance of mitochondrial organization and mitochondrial cristae structure. The protein is Coiled-coil-helix-coiled-coil-helix domain-containing protein 10, mitochondrial (CHCHD10) of Homo sapiens (Human).